Reading from the N-terminus, the 106-residue chain is Large ribosomal subunit protein uL24 (106 aa).

The protein belongs to the universal ribosomal protein uL24 family. Part of the 50S ribosomal subunit.

In terms of biological role, one of two assembly initiator proteins, it binds directly to the 5'-end of the 23S rRNA, where it nucleates assembly of the 50S subunit. One of the proteins that surrounds the polypeptide exit tunnel on the outside of the subunit. This is Large ribosomal subunit protein uL24 from Rhodospirillum rubrum (strain ATCC 11170 / ATH 1.1.1 / DSM 467 / LMG 4362 / NCIMB 8255 / S1).